The following is a 2059-amino-acid chain: Non-reducing polyketide synthase stmB (2059 aa).

Residues 7–243 enclose the Starter acyltransferase (SAT) domain; it reads LLFGDQTVEL…LKLAAYGAVH (237 aa). In terms of domain architecture, Ketosynthase family 3 (KS3) spans 366-796; that stretch reads SNSIAIVGMA…GGNSCLILEE (431 aa). Catalysis depends on for beta-ketoacyl synthase activity residues cysteine 538, histidine 673, and histidine 713. Residues 895–1185 enclose the Malonyl-CoA:ACP transacylase (MAT) domain; the sequence is WVFSGQGSQY…CGSMVKATLG (291 aa). The segment at 1273-1413 is N-terminal hotdog fold; that stretch reads LHFVKKETVT…SASEWTDEWS (141 aa). Residues 1273–1581 form the PKS/mFAS DH domain; it reads LHFVKKETVT…FQRMPRMVLH (309 aa). Histidine 1306 functions as the Proton acceptor; for dehydratase activity in the catalytic mechanism. The tract at residues 1435 to 1581 is C-terminal hotdog fold; it reads GDHLRRPVVY…FQRMPRMVLH (147 aa). The Proton donor; for dehydratase activity role is filled by aspartate 1495. The Carrier domain occupies 1619-1696; that stretch reads PPKHDLADQL…DARRALGGDE (78 aa). Serine 1656 carries the post-translational modification O-(pantetheine 4'-phosphoryl)serine. The interval 1693 to 1727 is disordered; sequence GGDETASESENDAEGDAPSDGGSPSGSWTPISPPE. The span at 1697–1709 shows a compositional bias: acidic residues; it reads TASESENDAEGDA. Over residues 1710 to 1719 the composition is skewed to low complexity; the sequence is PSDGGSPSGS. Residues 1778–2059 are thioesterase (TE) domain; it reads AVEYKSNVVL…LGKLLQEAVA (282 aa).

Requires pantetheine 4'-phosphate as cofactor.

It functions in the pathway mycotoxin biosynthesis. Functionally, non-reducing polyketide synthase; part of the gene cluster that mediates the biosynthesis of stromemycin, a depside C-glucoside with two unsaturated C9 side chains belonging to aromatic polyketide glycosides. The HR-PKS stmA and the NR-PKS stmB act as scaffold-generating enzymes responsible for the biosynthesis of the polyketide skeleton bininalkenylresorcylic acid. StmA condenses on acetyl-CoA starter unit with 4 malonyl-CoA units and the stmB uses 3 more malonyl-CoA units and catalyzes the depside bond formation. The glycoytransferase stmC then acts as the tailoring enzyme responsible for 3-C-glucosylation of bininalkenylresorcylic acid to yield stromemycin. The chain is Non-reducing polyketide synthase stmB from Aspergillus ustus.